The chain runs to 40 residues: Cytolysin EnT (40 aa).

The interval 3-12 (ALAGTIIEGA) is plays an important role in the hemolytic activity. The interval 11-30 (GASLTFSVLTTILDALGSVS) is N-terminal region.

This sequence belongs to the actinoporin family. Sea anemone subfamily. Octamer or nonamer in membranes. Monomer in the soluble state.

The protein resides in the secreted. It localises to the nematocyst. The protein localises to the target cell membrane. Pore-forming protein that forms cations-selective hydrophilic pores of around 1 nm and causes cytolysis. Pore formation is a multi-step process that involves specific recognition of membrane sphingomyelin (but neither cholesterol nor phosphatidylcholine) using aromatic rich region and adjacent phosphocholine (POC) binding site, firm binding to the membrane (mainly driven by hydrophobic interactions) accompanied by the transfer of the N-terminal region to the lipid-water interface and finally pore formation after oligomerization of monomers. This toxin shows hemolytic activities. This Entacmaea quadricolor (Bubble-tip anemone) protein is Cytolysin EnT.